The primary structure comprises 317 residues: MPVQGSQRRLLGSLNSTPTATPRLGLAANQTGARCLEVSIPDGLFLSLGLVSLVENVLVVVAIARNRNLHSPMYCFICCLALSDLLVSGSNMLDTAVILLLEAGALAARAAVVQQLDNVIDVITCSSMLSSLCFLGAIAVDRYISIFYALRYHSIVTLRRARRVVAAIWVASILFSTLFIAYCDHAAVLLCLVVFFLAMLVLMAVLYVHMLARACQHAQGIAQLHKRQRPAHQGVGLKGAATLTILLGIFFLCWGPFFLHLTLIVLCPQHPTCSCIFKNFNLFLTLIICNAIIDPLIYAFRSQELRRTLKKVLLCSW.

Topologically, residues 1–37 are extracellular; that stretch reads MPVQGSQRRLLGSLNSTPTATPRLGLAANQTGARCLE. A glycan (N-linked (GlcNAc...) asparagine) is linked at asparagine 29. A helical membrane pass occupies residues 38-63; it reads VSIPDGLFLSLGLVSLVENVLVVVAI. Over 64 to 72 the chain is Cytoplasmic; the sequence is ARNRNLHSP. The helical transmembrane segment at 73–93 threads the bilayer; it reads MYCFICCLALSDLLVSGSNML. The Extracellular portion of the chain corresponds to 94-118; sequence DTAVILLLEAGALAARAAVVQQLDN. Residues 119–140 form a helical membrane-spanning segment; it reads VIDVITCSSMLSSLCFLGAIAV. The Cytoplasmic portion of the chain corresponds to 141 to 163; that stretch reads DRYISIFYALRYHSIVTLRRARR. Residues 164–183 form a helical membrane-spanning segment; the sequence is VVAAIWVASILFSTLFIAYC. Residues 184-191 lie on the Extracellular side of the membrane; sequence DHAAVLLC. The chain crosses the membrane as a helical span at residues 192 to 211; sequence LVVFFLAMLVLMAVLYVHML. The Cytoplasmic segment spans residues 212-240; sequence ARACQHAQGIAQLHKRQRPAHQGVGLKGA. Residues 241-266 form a helical membrane-spanning segment; that stretch reads ATLTILLGIFFLCWGPFFLHLTLIVL. Topologically, residues 267–279 are extracellular; it reads CPQHPTCSCIFKN. The chain crosses the membrane as a helical span at residues 280–300; sequence FNLFLTLIICNAIIDPLIYAF. The Cytoplasmic portion of the chain corresponds to 301–317; sequence RSQELRRTLKKVLLCSW. The S-palmitoyl cysteine moiety is linked to residue cysteine 315.

It belongs to the G-protein coupled receptor 1 family. As to quaternary structure, interacts with MGRN1, but does not undergo MGRN1-mediated ubiquitination; this interaction competes with GNAS-binding and thus inhibits agonist-induced cAMP production. Interacts with OPN3; the interaction results in a decrease in MC1R-mediated cAMP signaling and ultimately a decrease in melanin production in melanocytes.

The protein resides in the cell membrane. Receptor for MSH (alpha, beta and gamma) and ACTH. The activity of this receptor is mediated by G proteins which activate adenylate cyclase. Mediates melanogenesis, the production of eumelanin (black/brown) and phaeomelanin (red/yellow), via regulation of cAMP signaling in melanocytes. This Trachypithecus francoisi (Francois' leaf monkey) protein is Melanocyte-stimulating hormone receptor (MC1R).